The primary structure comprises 397 residues: Cysteine desulfurase IscS (397 aa).

Pyridoxal 5'-phosphate-binding positions include 72–73 (GS), N152, Q180, and 200–202 (SAH). K203 bears the N6-(pyridoxal phosphate)lysine mark. T238 lines the pyridoxal 5'-phosphate pocket. C328 acts as the Cysteine persulfide intermediate in catalysis. C328 lines the [2Fe-2S] cluster pocket.

It belongs to the class-V pyridoxal-phosphate-dependent aminotransferase family. NifS/IscS subfamily. As to quaternary structure, homodimer. Forms a heterotetramer with IscU, interacts with other sulfur acceptors. Pyridoxal 5'-phosphate is required as a cofactor.

The protein localises to the cytoplasm. It catalyses the reaction (sulfur carrier)-H + L-cysteine = (sulfur carrier)-SH + L-alanine. Its pathway is cofactor biosynthesis; iron-sulfur cluster biosynthesis. In terms of biological role, master enzyme that delivers sulfur to a number of partners involved in Fe-S cluster assembly, tRNA modification or cofactor biosynthesis. Catalyzes the removal of elemental sulfur atoms from cysteine to produce alanine. Functions as a sulfur delivery protein for Fe-S cluster synthesis onto IscU, an Fe-S scaffold assembly protein, as well as other S acceptor proteins. The sequence is that of Cysteine desulfurase IscS from Clostridium botulinum (strain ATCC 19397 / Type A).